A 203-amino-acid chain; its full sequence is ATP-dependent Clp protease proteolytic subunit (203 aa).

Ser107 functions as the Nucleophile in the catalytic mechanism. His132 is an active-site residue.

This sequence belongs to the peptidase S14 family. In terms of assembly, fourteen ClpP subunits assemble into 2 heptameric rings which stack back to back to give a disk-like structure with a central cavity, resembling the structure of eukaryotic proteasomes.

It is found in the cytoplasm. The catalysed reaction is Hydrolysis of proteins to small peptides in the presence of ATP and magnesium. alpha-casein is the usual test substrate. In the absence of ATP, only oligopeptides shorter than five residues are hydrolyzed (such as succinyl-Leu-Tyr-|-NHMec, and Leu-Tyr-Leu-|-Tyr-Trp, in which cleavage of the -Tyr-|-Leu- and -Tyr-|-Trp bonds also occurs).. In terms of biological role, cleaves peptides in various proteins in a process that requires ATP hydrolysis. Has a chymotrypsin-like activity. Plays a major role in the degradation of misfolded proteins. The sequence is that of ATP-dependent Clp protease proteolytic subunit from Shewanella denitrificans (strain OS217 / ATCC BAA-1090 / DSM 15013).